The chain runs to 974 residues: UvrABC system protein A (974 aa).

34–41 contributes to the ATP binding site; that stretch reads GLSGSGKS. 2 consecutive ABC transporter domains span residues 331-610 and 630-959; these read WARS…TNSL and ISKT…QFLK. ATP is bound at residue 663–670; it reads GVSGGGKS. A C4-type zinc finger spans residues 762-788; that stretch reads CEACQGDGVIKIEMHFLPDVYVTCDVC.

The protein belongs to the ABC transporter superfamily. UvrA family. In terms of assembly, forms a heterotetramer with UvrB during the search for lesions.

It is found in the cytoplasm. In terms of biological role, the UvrABC repair system catalyzes the recognition and processing of DNA lesions. UvrA is an ATPase and a DNA-binding protein. A damage recognition complex composed of 2 UvrA and 2 UvrB subunits scans DNA for abnormalities. When the presence of a lesion has been verified by UvrB, the UvrA molecules dissociate. This Brucella suis biovar 1 (strain 1330) protein is UvrABC system protein A.